Reading from the N-terminus, the 327-residue chain is Protein MRG2 (327 aa).

Positions 1–40 (MGSPNAAAETDLTTDDFIGDTRRDSGSDTETNTDCDGEDL) are disordered. The Tudor-knot domain maps to 52 to 101 (FEEGERVLAKHSDCFYEAKVLKVEFKDNEWKYFVHYIGWNKSWDEWIRLD). The disordered stretch occupies residues 133 to 156 (SKMKPRSPNVARGRKRKQDSVDTE). The 166-residue stretch at 162–327 (SDNLLSFNIP…AVEEMEKKEG (166 aa)) folds into the MRG domain.

As to quaternary structure, interacts with HAM1 and HAM2. Interacts (via MRG domain) with CO. Component of the NuA4 histone acetyltransferase complex. As to expression, ubiquitous. Mainly expressed in the vasculature of cotyledons and leaves, and in roots and inflorescences.

It is found in the nucleus. In terms of biological role, chromatin remodeling factor. Acts as a 'reader' protein by binding to H3K4me3 and H3K36me3 to control histone H4 acetylation. Increases the transcriptional levels of the flowering time genes FLC and FT. Binds the chromatin at the FT promoter upon interaction with CO. The polypeptide is Protein MRG2 (Arabidopsis thaliana (Mouse-ear cress)).